The following is a 213-amino-acid chain: MTKMSRYALITALAMFLAGCVGQREPAPVEEVKPAPEQPAEPQQPVPTVPSVPTIPQQPGPIEHEDQTAPPAPHIRHYDWNGAMQPMVSKMLGADGVTAGSVLLVDSVNNRTNGSLNAAEATETLRNALANNGKFTLVSAQQLSMAKQQLGLSPQDSLGTRSKAIGIARNVGAHYVLYSSASGNVNAPTLQMQLMLVQTGEIIWSGKGAVSQQ.

The signal sequence occupies residues Met1–Gly19. Cys20 is lipidated: N-palmitoyl cysteine. Cys20 is lipidated: S-diacylglycerol cysteine. The segment at Pro28–His74 is disordered. Residues Pro36 to Pro50 are compositionally biased toward pro residues.

Belongs to the LpoB family. As to quaternary structure, interacts with PBP1b.

The protein resides in the cell outer membrane. In terms of biological role, regulator of peptidoglycan synthesis that is essential for the function of penicillin-binding protein 1B (PBP1b). The sequence is that of Penicillin-binding protein activator LpoB from Escherichia coli O157:H7.